The primary structure comprises 403 residues: Keratin, type I cytoskeletal 19 (403 aa).

The segment at 1-82 is head; that stretch reads MTSYSYRQTS…AVSDGLLSGN (82 aa). R7 bears the Omega-N-methylarginine mark. Residues S14 and S22 each carry the phosphoserine modification. R24 is modified (asymmetric dimethylarginine; alternate). Residue R24 is modified to Omega-N-methylarginine; alternate. S27 carries the phosphoserine modification. Position 32 is an omega-N-methylarginine (R32). A phosphoserine mark is found at S35 and S40. An omega-N-methylarginine mark is found at R43 and R51. Phosphoserine is present on S57. R64 carries the post-translational modification Omega-N-methylarginine. Residues S67 and S75 each carry the phosphoserine modification. The coil 1A stretch occupies residues 83 to 118; that stretch reads EKITMQNLNDRLASYLDKVRALEQANGELEVKIRDW. Positions 83 to 394 constitute an IF rod domain; that stretch reads EKITMQNLND…SLLEGQEAHY (312 aa). Residues 119–136 form a linker 1 region; the sequence is YQKQGPGPSRDYNHYFKT. The interval 137-228 is coil 1B; it reads IEDLRDKILG…KNHEEEITAL (92 aa). A linker 12 region spans residues 229–251; the sequence is RSQVGGQVSVEVDSTPGVDLAKI. Positions 247-393 are necessary for interaction with PNN; it reads DLAKILSEMR…RSLLEGQEAH (147 aa). Residues 252-390 are coil 2; it reads LSEMRSQYEI…ATYRSLLEGQ (139 aa). Phosphothreonine is present on T326. Residues 391–403 form a rod-like helical tail region; it reads EAHYNNLPTPKAI. Y394 is subject to Phosphotyrosine.

The protein belongs to the intermediate filament family. Heterotetramer of two type I and two type II keratins. Interacts with PNN and the actin-binding domain of DMD.

Functionally, involved in the organization of myofibers. Together with KRT8, helps to link the contractile apparatus to dystrophin at the costameres of striated muscle. In Mus musculus (Mouse), this protein is Keratin, type I cytoskeletal 19 (Krt19).